The primary structure comprises 447 residues: DNA primase DnaG (447 aa).

The Toprim domain maps to 200–274 (DSIIVVEGRA…DIDYVARAPE (75 aa)). The Mg(2+) site is built by glutamate 206, aspartate 248, and aspartate 250.

It belongs to the archaeal DnaG primase family. Forms a ternary complex with MCM helicase and DNA. Component of the archaeal exosome complex. It depends on Mg(2+) as a cofactor.

The catalysed reaction is ssDNA + n NTP = ssDNA/pppN(pN)n-1 hybrid + (n-1) diphosphate.. Its function is as follows. RNA polymerase that catalyzes the synthesis of short RNA molecules used as primers for DNA polymerase during DNA replication. Also part of the exosome, which is a complex involved in RNA degradation. Acts as a poly(A)-binding protein that enhances the interaction between heteromeric, adenine-rich transcripts and the exosome. In Pyrococcus horikoshii (strain ATCC 700860 / DSM 12428 / JCM 9974 / NBRC 100139 / OT-3), this protein is DNA primase DnaG.